Reading from the N-terminus, the 113-residue chain is Iron-sulfur cluster insertion protein ErpA (113 aa).

C41, C105, and C107 together coordinate iron-sulfur cluster.

The protein belongs to the HesB/IscA family. Homodimer. Iron-sulfur cluster serves as cofactor.

Functionally, required for insertion of 4Fe-4S clusters for at least IspG. This chain is Iron-sulfur cluster insertion protein ErpA, found in Aliivibrio fischeri (strain ATCC 700601 / ES114) (Vibrio fischeri).